We begin with the raw amino-acid sequence, 62 residues long: Large ribosomal subunit protein bL28 (62 aa).

The disordered stretch occupies residues 1–28 (MARVCAITGRKARSGNSRSHAMNATKRK).

This sequence belongs to the bacterial ribosomal protein bL28 family.

This chain is Large ribosomal subunit protein bL28, found in Bacillus cytotoxicus (strain DSM 22905 / CIP 110041 / 391-98 / NVH 391-98).